The following is a 662-amino-acid chain: ABC transporter G family member 17 (662 aa).

The ABC transporter domain occupies 22–276 (LAFNDLTYNV…FSEFGSPIPE (255 aa)). Position 69–76 (69–76 (GASGAGKS)) interacts with ATP. Residues 356 to 566 (VETVILAKRY…PYEAVLHNEF (211 aa)) enclose the ABC transmembrane type-2 domain. A run of 6 helical transmembrane segments spans residues 375–395 (LIGTRVFIVMMTGFLLATVYW), 410–430 (FFSFAMATMFYSCADGLPAFI), 451–471 (VISHSLVTLPHLFALSIGFAA), 486–508 (FIYYLMIIFASFWSGCSFVTFVS), 514–536 (VMMSYMVTFGYLSYCLLFSGFYV), and 635–655 (LWVTLAWGFFFRILFYFSLLL).

Belongs to the ABC transporter superfamily. ABCG family. Eye pigment precursor importer (TC 3.A.1.204) subfamily.

Its subcellular location is the membrane. This chain is ABC transporter G family member 17 (ABCG17), found in Arabidopsis thaliana (Mouse-ear cress).